We begin with the raw amino-acid sequence, 261 residues long: Indole-3-glycerol phosphate synthase (261 aa).

This sequence belongs to the TrpC family.

The catalysed reaction is 1-(2-carboxyphenylamino)-1-deoxy-D-ribulose 5-phosphate + H(+) = (1S,2R)-1-C-(indol-3-yl)glycerol 3-phosphate + CO2 + H2O. The protein operates within amino-acid biosynthesis; L-tryptophan biosynthesis; L-tryptophan from chorismate: step 4/5. This Burkholderia pseudomallei (strain 1106a) protein is Indole-3-glycerol phosphate synthase.